The sequence spans 46 residues: Pape peptide (46 aa).

Low complexity predominate over residues 1 to 10; sequence KQLLKEALAP. The interval 1–46 is disordered; that stretch reads KQLLKEALAPEPAPKPAPEPAPEPAPEPAPEAAPEPAAAAPEAAPE. Positions 11-33 are enriched in pro residues; sequence EPAPKPAPEPAPEPAPEPAPEAA. PAPE repeat units lie at residues 16-19, 20-23, 24-27, and 28-31; these read PAPE. Residues 34-46 show a composition bias toward low complexity; sequence PEPAAAAPEAAPE.

Expressed by the venom gland.

The protein resides in the secreted. The protein is Pape peptide of Tityus stigmurus (Brazilian scorpion).